A 118-amino-acid chain; its full sequence is Large ribosomal subunit protein bL19 (118 aa).

This sequence belongs to the bacterial ribosomal protein bL19 family.

This protein is located at the 30S-50S ribosomal subunit interface and may play a role in the structure and function of the aminoacyl-tRNA binding site. The sequence is that of Large ribosomal subunit protein bL19 from Salinispora tropica (strain ATCC BAA-916 / DSM 44818 / JCM 13857 / NBRC 105044 / CNB-440).